The chain runs to 181 residues: Oligoribonuclease (181 aa).

An Exonuclease domain is found at 8–171 (LIWVDLEMTG…VDIQESIAEL (164 aa)). Tyr-129 is an active-site residue.

It belongs to the oligoribonuclease family.

It is found in the cytoplasm. In terms of biological role, 3'-to-5' exoribonuclease specific for small oligoribonucleotides. This Shewanella loihica (strain ATCC BAA-1088 / PV-4) protein is Oligoribonuclease.